A 233-amino-acid polypeptide reads, in one-letter code: Lipid A 4'-phosphatase (233 aa).

Residue Met-1 is a topological domain, cytoplasmic. Residues 2–22 (LLFWMWWALLAVFRAFPGIDI) traverse the membrane as a helical segment. At 23–60 (YFSQLFFVGADCDATAAAGNICGGFPYRDVAAFDLLRT) the chain is on the extracellular side. A helical membrane pass occupies residues 61–81 (VFFRLPYVVAIVMVWKLVECY). Residues 82–94 (QQHGATFNAERAQ) lie on the Cytoplasmic side of the membrane. Residues 95-115 (KLKVALGTLLIGPVLLVNVVL) form a helical membrane-spanning segment. Residues 116–149 (KEHWGRPRPIQTDIFGGALHFAEAGSLAGKCVSN) lie on the Extracellular side of the membrane. A helical transmembrane segment spans residues 150 to 170 (CSFVSGEAASAGWLFCLLLFV). The Cytoplasmic portion of the chain corresponds to 171–176 (PKSLRY). The chain crosses the membrane as a helical span at residues 177–197 (AVAAPLAAISILTPAMRLSFG). The Extracellular segment spans residues 198-200 (AHY). Residues 201-221 (LSDVVLGWLSSLVVFAALLAL) traverse the membrane as a helical segment. Residues 222-233 (TESQQHQKNSEI) are Cytoplasmic-facing.

It belongs to the lipid A LpxF 4'-phosphatase family.

It localises to the cell inner membrane. The protein operates within bacterial outer membrane biogenesis; LPS lipid A biosynthesis. Removes the 4'-phosphate moiety from lipid IV(A) (a tetraacylated precursor of lipid A). In Rhizobium leguminosarum, this protein is Lipid A 4'-phosphatase.